Reading from the N-terminus, the 653-residue chain is DNA-directed RNA polymerase III subunit RPC-3 (653 aa).

Disordered regions lie at residues 141-186 (INGV…DSDP), 280-309 (DSSA…DFSD), and 422-442 (IKED…KRRG). Over residues 159-170 (AENHTDHAHDYQ) the composition is skewed to basic and acidic residues. Acidic residues-rich tracts occupy residues 293 to 309 (PLED…DFSD) and 424 to 433 (EDEDDEDEEG). The tract at residues 580–601 (TYKSMSRCLQRIRVEREKLKFL) is leucine-zipper.

Belongs to the RNA polymerase beta chain family. Component of the RNA polymerase III (Pol III) complex consisting of 17 subunits.

Its subcellular location is the nucleus. In terms of biological role, DNA-dependent RNA polymerase catalyzes the transcription of DNA into RNA using the four ribonucleoside triphosphates as substrates. Specific core component of RNA polymerase III which synthesizes small RNAs, such as 5S rRNA and tRNAs. In Coccidioides immitis (strain RS) (Valley fever fungus), this protein is DNA-directed RNA polymerase III subunit RPC-3 (RPC-82).